Here is a 160-residue protein sequence, read N- to C-terminus: Small RNA binding protein 1 (160 aa).

The RRM domain maps to 8 to 86 (FRCFVGGLAW…RNITVNEAQQ (79 aa)). A disordered region spans residues 82-160 (NEAQQRGGGG…GGGSEGGWRN (79 aa)). The span at 87–160 (RGGGGGGGYN…GGGSEGGWRN (74 aa)) shows a compositional bias: gly residues. The interval 88–157 (GGGGGGGYNR…GSGGGGSEGG (70 aa)) is glycine-rich (GR) required for cell-to-cell movement.

It belongs to the GR-RBP family. As to quaternary structure, binds to small phloem-mobile single-stranded RNAs (ss-sRNA, e.g. small interfering RNA (siRNA) and microRNA (miRNA)) in the phloeme exudate, including viral-derived sRNA (vsiRNA). In terms of tissue distribution, accumulates in phloem exudates.

It is found in the secreted. Its function is as follows. Possibly has a role in RNA transcription or processing during stress. Binds sequence non-specifically to RNAs and DNAs. Mediates cell-to-cell trafficking of RNA interference (RNAi) signals (small RNAs (sRNA), e.g. small interfering RNA (siRNA) and microRNA (miRNA)) which regulate growth and development, as well as responses to environmental inputs, including pathogen attack; can compromise zucchini yellow mosaic virus (ZYMV) and tobacco rattle virus (TRV) infections at the early stage. This is Small RNA binding protein 1 from Cucumis sativus (Cucumber).